The chain runs to 211 residues: Large ribosomal subunit protein eL13 (211 aa).

K16 is modified (N6-acetyllysine). 2 positions are modified to phosphoserine: S52 and S77. Glycyl lysine isopeptide (Lys-Gly) (interchain with G-Cter in SUMO2) cross-links involve residues K123 and K145. K174 participates in a covalent cross-link: Glycyl lysine isopeptide (Lys-Gly) (interchain with G-Cter in SUMO1); alternate. Residues K174 and K177 each participate in a glycyl lysine isopeptide (Lys-Gly) (interchain with G-Cter in SUMO2); alternate cross-link. K177 carries the N6-acetyllysine; alternate modification.

This sequence belongs to the eukaryotic ribosomal protein eL13 family. As to quaternary structure, component of the 60S large ribosomal subunit (LSU).

The protein localises to the cytoplasm. Functionally, component of the ribosome, a large ribonucleoprotein complex responsible for the synthesis of proteins in the cell. The small ribosomal subunit (SSU) binds messenger RNAs (mRNAs) and translates the encoded message by selecting cognate aminoacyl-transfer RNA (tRNA) molecules. The large subunit (LSU) contains the ribosomal catalytic site termed the peptidyl transferase center (PTC), which catalyzes the formation of peptide bonds, thereby polymerizing the amino acids delivered by tRNAs into a polypeptide chain. The nascent polypeptides leave the ribosome through a tunnel in the LSU and interact with protein factors that function in enzymatic processing, targeting, and the membrane insertion of nascent chains at the exit of the ribosomal tunnel. As part of the LSU, it is probably required for its formation and the maturation of rRNAs. Plays a role in bone development. The protein is Large ribosomal subunit protein eL13 (RPL13) of Bos taurus (Bovine).